A 174-amino-acid polypeptide reads, in one-letter code: Regenerating islet-derived protein 3-gamma (174 aa).

The N-terminal stretch at 1 to 26 (MLPRVALTTMSWMLLSSLMLLSQVQG) is a signal peptide. Residues 27-37 (EDAKEDVPTSR) constitute a propeptide that is removed on maturation. Cystine bridges form between Cys-40/Cys-51, Cys-68/Cys-170, and Cys-145/Cys-162. Residues 47–171 (YGSYCYALFS…CISELPYVCK (125 aa)) form the C-type lectin domain. Residues 103–118 (WIGLHDPTLGQEPNRG) are sufficient to activate EXTL3. Zn(2+) is bound at residue His-107. An EPN motif is present at residues 114–116 (EPN). Zn(2+) is bound by residues Glu-121 and His-144.

Forms a hexameric membrane-permeabilizing oligomeric pore on membrane phospholipids. The hexamer is formed by three dimers related by helical symmetry. Forms filaments, filamentation traps pore complexes and limits damage to host cells. Interacts with EXTL3. In terms of processing, proteolytic processing by trypsin removes an inhibitory N-terminal propeptide and is essential for peptidoglycan binding and antibacterial activity. Expressed in injured skeletal muscles and sciatic nerve (at protein level). Expressed in the pancreas. Expression increases during the acute phase of pancreatitis.

The protein resides in the secreted. It localises to the cytoplasm. Its activity is regulated as follows. Lipopolysaccharide inhibits pore-forming activity, explaining why is bactericidal for Gram-positive but not Gram-negative bacteria. Bactericidal C-type lectin which acts exclusively against Gram-positive bacteria and mediates bacterial killing by binding to surface-exposed carbohydrate moieties of peptidoglycan. Restricts bacterial colonization of the intestinal epithelial surface and consequently limits activation of adaptive immune responses by the microbiota. Its function is as follows. Acts as a hormone in response to different stimuli like anti-inflammatory signals, such as IL17A, or gut microbiome. Is secreted by different cell types to activate its receptor EXTL3 and induce cell specific signaling pathways. Induced by IL17A in keratinocytes, regulates keratinocyte proliferation and differentiation after skin injury. In parallel, inhibits skin inflammation through the inhibition of inflammatory cytokines such as IL6 and TNF. Induced by IL22 in lung epithelial cells, inhibits cytokine production and regulates allergic airway inflammation. Induced in small intestine by inulin-enriched diet and Lactobacillus gasseri enriched microbiome, plays a role in the improvement of gut barrier function, the regulation of energy balance and glucose levels. Modulates microbiota composition in duodenal contents. Produced by nociceptor in response to endotoxins, prevents endotoxic death by targeting kynurenine pathway in microglia. In terms of biological role, has bacteriostatic activity. Functionally, has bactericidal activity against L.monocytogenes and methicillin-resistant S.aureus. This is Regenerating islet-derived protein 3-gamma from Rattus norvegicus (Rat).